The following is a 130-amino-acid chain: Larval cuticle protein 1 (130 aa).

Positions 1-16 are cleaved as a signal peptide; it reads MFKFVMICAVLGLAVA. The region spanning 43-104 is the Chitin-binding type R&amp;R domain; it reads ADGFDSSLHT…PSGAWIPTPP (62 aa).

Component of the larval cuticle. This Drosophila melanogaster (Fruit fly) protein is Larval cuticle protein 1 (Lcp1).